A 118-amino-acid chain; its full sequence is Thioredoxin H-type 2 (118 aa).

A Thioredoxin domain is found at 2–113; sequence AEEGQVIGVH…LQQTIAKHIS (112 aa). Active-site nucleophile residues include Cys39 and Cys42. Cysteines 39 and 42 form a disulfide.

The protein belongs to the thioredoxin family. Plant H-type subfamily.

The protein resides in the cytoplasm. Its function is as follows. Participates in various redox reactions through the reversible oxidation of the active center dithiol to a disulfide. The H form is known to activate a number of cytosolic enzymes. The chain is Thioredoxin H-type 2 from Nicotiana tabacum (Common tobacco).